Consider the following 254-residue polypeptide: Dihydroorotate dehydrogenase B (NAD(+)), electron transfer subunit (254 aa).

The FAD-binding FR-type domain maps to 1–99 (MLQTEMKVIQ…LGPLGKGFDI (99 aa)). Residues 50–53 (RPIS), 67–69 (LYR), and 74–75 (GT) each bind FAD. Residues cysteine 218, cysteine 223, cysteine 226, and cysteine 241 each coordinate [2Fe-2S] cluster.

Belongs to the PyrK family. In terms of assembly, heterotetramer of 2 PyrK and 2 PyrD type B subunits. It depends on [2Fe-2S] cluster as a cofactor. Requires FAD as cofactor.

Its pathway is pyrimidine metabolism; UMP biosynthesis via de novo pathway; orotate from (S)-dihydroorotate (NAD(+) route): step 1/1. Functionally, responsible for channeling the electrons from the oxidation of dihydroorotate from the FMN redox center in the PyrD type B subunit to the ultimate electron acceptor NAD(+). This chain is Dihydroorotate dehydrogenase B (NAD(+)), electron transfer subunit, found in Listeria welshimeri serovar 6b (strain ATCC 35897 / DSM 20650 / CCUG 15529 / CIP 8149 / NCTC 11857 / SLCC 5334 / V8).